Consider the following 481-residue polypeptide: Protein nucleotidyltransferase YdiU (481 aa).

Residues Gly-85, Gly-87, Arg-88, Lys-108, Asp-120, Gly-121, Arg-172, and Arg-179 each contribute to the ATP site. The active-site Proton acceptor is the Asp-248. Mg(2+) is bound by residues Asn-249 and Asp-258. Asp-258 lines the ATP pocket.

The protein belongs to the SELO family. Requires Mg(2+) as cofactor. It depends on Mn(2+) as a cofactor.

The enzyme catalyses L-seryl-[protein] + ATP = 3-O-(5'-adenylyl)-L-seryl-[protein] + diphosphate. It catalyses the reaction L-threonyl-[protein] + ATP = 3-O-(5'-adenylyl)-L-threonyl-[protein] + diphosphate. It carries out the reaction L-tyrosyl-[protein] + ATP = O-(5'-adenylyl)-L-tyrosyl-[protein] + diphosphate. The catalysed reaction is L-histidyl-[protein] + UTP = N(tele)-(5'-uridylyl)-L-histidyl-[protein] + diphosphate. The enzyme catalyses L-seryl-[protein] + UTP = O-(5'-uridylyl)-L-seryl-[protein] + diphosphate. It catalyses the reaction L-tyrosyl-[protein] + UTP = O-(5'-uridylyl)-L-tyrosyl-[protein] + diphosphate. In terms of biological role, nucleotidyltransferase involved in the post-translational modification of proteins. It can catalyze the addition of adenosine monophosphate (AMP) or uridine monophosphate (UMP) to a protein, resulting in modifications known as AMPylation and UMPylation. The protein is Protein nucleotidyltransferase YdiU of Cereibacter sphaeroides (strain KD131 / KCTC 12085) (Rhodobacter sphaeroides).